The following is a 208-amino-acid chain: NAD(P)H-quinone oxidoreductase subunit I (208 aa).

4Fe-4S ferredoxin-type domains lie at 55 to 84 and 95 to 124; these read GRIH…VDWV and RNYS…MTEE. Residues C64, C67, C70, C74, C104, C107, C110, and C114 each contribute to the [4Fe-4S] cluster site.

Belongs to the complex I 23 kDa subunit family. As to quaternary structure, NDH-1 is composed of at least 11 different subunits. [4Fe-4S] cluster is required as a cofactor.

The protein localises to the cellular thylakoid membrane. The enzyme catalyses a plastoquinone + NADH + (n+1) H(+)(in) = a plastoquinol + NAD(+) + n H(+)(out). It catalyses the reaction a plastoquinone + NADPH + (n+1) H(+)(in) = a plastoquinol + NADP(+) + n H(+)(out). In terms of biological role, NDH-1 shuttles electrons from an unknown electron donor, via FMN and iron-sulfur (Fe-S) centers, to quinones in the respiratory and/or the photosynthetic chain. The immediate electron acceptor for the enzyme in this species is believed to be plastoquinone. Couples the redox reaction to proton translocation, and thus conserves the redox energy in a proton gradient. The chain is NAD(P)H-quinone oxidoreductase subunit I from Prochlorococcus marinus subsp. pastoris (strain CCMP1986 / NIES-2087 / MED4).